The sequence spans 68 residues: DNA-directed RNA polymerase subunit omega (68 aa).

Belongs to the RNA polymerase subunit omega family. The RNAP catalytic core consists of 2 alpha, 1 beta, 1 beta' and 1 omega subunit. When a sigma factor is associated with the core the holoenzyme is formed, which can initiate transcription.

The catalysed reaction is RNA(n) + a ribonucleoside 5'-triphosphate = RNA(n+1) + diphosphate. Functionally, promotes RNA polymerase assembly. Latches the N- and C-terminal regions of the beta' subunit thereby facilitating its interaction with the beta and alpha subunits. This Desulfatibacillum aliphaticivorans protein is DNA-directed RNA polymerase subunit omega.